A 220-amino-acid chain; its full sequence is N-(5'-phosphoribosyl)anthranilate isomerase (220 aa).

It belongs to the TrpF family.

It carries out the reaction N-(5-phospho-beta-D-ribosyl)anthranilate = 1-(2-carboxyphenylamino)-1-deoxy-D-ribulose 5-phosphate. Its pathway is amino-acid biosynthesis; L-tryptophan biosynthesis; L-tryptophan from chorismate: step 3/5. The polypeptide is N-(5'-phosphoribosyl)anthranilate isomerase (Agrobacterium fabrum (strain C58 / ATCC 33970) (Agrobacterium tumefaciens (strain C58))).